The primary structure comprises 151 residues: UPF0208 membrane protein YfbV (151 aa).

A run of 2 helical transmembrane segments spans residues 46–65 (YAIRFMPPIAVFTLCWQIAL) and 69–91 (LGPAVATALFALSLPMQGLWWLG).

It belongs to the UPF0208 family.

The protein localises to the cell inner membrane. This chain is UPF0208 membrane protein YfbV, found in Shigella boydii serotype 18 (strain CDC 3083-94 / BS512).